Reading from the N-terminus, the 399-residue chain is Elongation factor Tu (399 aa).

The region spanning Lys10 to Glu204 is the tr-type G domain. The segment at Gly19 to Thr26 is G1. Gly19–Thr26 is a binding site for GTP. A Mg(2+)-binding site is contributed by Thr26. Residues Gly60–Asn64 are G2. The interval Asp81 to Gly84 is G3. GTP-binding positions include Asp81 to His85 and Asn136 to Asp139. Residues Asn136–Asp139 form a G4 region. The segment at Ser174–Leu176 is G5.

It belongs to the TRAFAC class translation factor GTPase superfamily. Classic translation factor GTPase family. EF-Tu/EF-1A subfamily. In terms of assembly, monomer.

Its subcellular location is the cytoplasm. The catalysed reaction is GTP + H2O = GDP + phosphate + H(+). In terms of biological role, GTP hydrolase that promotes the GTP-dependent binding of aminoacyl-tRNA to the A-site of ribosomes during protein biosynthesis. The protein is Elongation factor Tu of Prochlorococcus marinus (strain MIT 9303).